A 452-amino-acid polypeptide reads, in one-letter code: tRNA modification GTPase MnmE (452 aa).

The (6S)-5-formyl-5,6,7,8-tetrahydrofolate site is built by R21, E82, and R121. In terms of domain architecture, TrmE-type G spans 214 to 372; sequence GARVVLVGRP…LAKTIATTLL (159 aa). Residue N224 coordinates K(+). GTP is bound by residues 224-229, 243-249, 268-271, and 353-355; these read NVGKSS, TPIPGTT, DTAG, and SAR. A Mg(2+)-binding site is contributed by S228. K(+)-binding residues include T243, I245, and T248. A Mg(2+)-binding site is contributed by T249. K452 contributes to the (6S)-5-formyl-5,6,7,8-tetrahydrofolate binding site.

The protein belongs to the TRAFAC class TrmE-Era-EngA-EngB-Septin-like GTPase superfamily. TrmE GTPase family. As to quaternary structure, homodimer. Heterotetramer of two MnmE and two MnmG subunits. Requires K(+) as cofactor.

Its subcellular location is the cytoplasm. Its function is as follows. Exhibits a very high intrinsic GTPase hydrolysis rate. Involved in the addition of a carboxymethylaminomethyl (cmnm) group at the wobble position (U34) of certain tRNAs, forming tRNA-cmnm(5)s(2)U34. This Chloroflexus aurantiacus (strain ATCC 29366 / DSM 635 / J-10-fl) protein is tRNA modification GTPase MnmE.